Reading from the N-terminus, the 360-residue chain is GDP-mannose transporter (360 aa).

Over 1 to 49 (MSSSETKGRNEEDVAEIKKAIATGAVKDPSNLSAIPPIFVVSGANFSMN) the chain is Cytoplasmic. The chain crosses the membrane as a helical span at residues 50-67 (FLLLCIQSSVCCACVFAV). Residues 68–84 (KKLGIISFRDFDMKDAK) are Lumenal-facing. A helical transmembrane segment spans residues 85 to 105 (MWFPISFLLVSVIYTGSKSLQ). Residues 106–110 (YLSIP) lie on the Cytoplasmic side of the membrane. Residues 111–131 (VYTIFKNLTIILIAYGEVLWF) traverse the membrane as a helical segment. At 132–134 (GGR) the chain is on the lumenal side. A helical transmembrane segment spans residues 135–155 (VTALTFVSFIFMVISSIIAAW). Residues 156–164 (SDVQSALAS) lie on the Cytoplasmic side of the membrane. Residues 165-185 (SIPGASSGVSVGAMQSLFGAL) form a helical membrane-spanning segment. Residue R186 is a topological domain, lumenal. Residues 187–207 (GLNVGYFWMLVNCLTSAAYVL) form a helical membrane-spanning segment. The Cytoplasmic segment spans residues 208 to 220 (SMRKRIKSTGFSD). The chain crosses the membrane as a helical span at residues 221–241 (WDTMFYNNLLSIPVLAVFSLI). Over 242-260 (AEDWGRENLNRNFPAETRN) the chain is Lumenal. A helical transmembrane segment spans residues 261–281 (FLLFAIAFSGAAAVGISYTTA). The Cytoplasmic portion of the chain corresponds to 282–291 (WCVRVTSSTT). Residues 292-312 (YSMVGALNKLPVAASGMLFFG) form a helical membrane-spanning segment. At 313–314 (DP) the chain is on the lumenal side. A helical membrane pass occupies residues 315 to 335 (VTVGSVSAVGVGFFAGIVYAV). Topologically, residues 336-360 (AKNNQKKNERRQAADAIIPMASRKP) are cytoplasmic.

It belongs to the TPT transporter family. SLC35D subfamily. As to quaternary structure, homooligomer.

The protein localises to the golgi apparatus membrane. The protein resides in the cytoplasmic vesicle membrane. Its subcellular location is the endoplasmic reticulum membrane. In terms of biological role, involved in the import of GDP-mannose from the cytoplasm into the Golgi lumen. The polypeptide is GDP-mannose transporter (VRG4) (Coprinopsis cinerea (strain Okayama-7 / 130 / ATCC MYA-4618 / FGSC 9003) (Inky cap fungus)).